A 207-amino-acid polypeptide reads, in one-letter code: Ribosomal RNA small subunit methyltransferase G (207 aa).

Residues G73, L78, 124 to 125 (VE), and R139 contribute to the S-adenosyl-L-methionine site.

It belongs to the methyltransferase superfamily. RNA methyltransferase RsmG family.

It is found in the cytoplasm. The catalysed reaction is guanosine(527) in 16S rRNA + S-adenosyl-L-methionine = N(7)-methylguanosine(527) in 16S rRNA + S-adenosyl-L-homocysteine. In terms of biological role, specifically methylates the N7 position of guanine in position 527 of 16S rRNA. The protein is Ribosomal RNA small subunit methyltransferase G of Cronobacter sakazakii (strain ATCC BAA-894) (Enterobacter sakazakii).